The sequence spans 374 residues: Alcohol dehydrogenase 1 (374 aa).

S1 bears the N-acetylserine mark. Residues C46, H67, C97, C100, C103, C111, and C174 each contribute to the Zn(2+) site. Residues 199–204, D223, K228, 292–294, and R369 contribute to the NAD(+) site; these read GLGGVG and VGV.

The protein belongs to the zinc-containing alcohol dehydrogenase family. Class-I subfamily. As to quaternary structure, homodimer. It depends on Zn(2+) as a cofactor.

The protein resides in the cytoplasm. It carries out the reaction a primary alcohol + NAD(+) = an aldehyde + NADH + H(+). It catalyses the reaction a secondary alcohol + NAD(+) = a ketone + NADH + H(+). This Struthio camelus (Common ostrich) protein is Alcohol dehydrogenase 1 (ADH1).